We begin with the raw amino-acid sequence, 436 residues long: GTPase Der (436 aa).

2 EngA-type G domains span residues 4-167 and 176-351; these read PIVA…GEEE and IRLS…ENHK. Residues 10 to 17, 57 to 61, 119 to 122, 182 to 189, 229 to 233, and 294 to 297 contribute to the GTP site; these read GRPNVGKS, DTGGI, NKVD, DTAGM, and NKWD. The KH-like domain maps to 352–436; it reads KRVQSSTLNE…PIHIIARKRN (85 aa).

It belongs to the TRAFAC class TrmE-Era-EngA-EngB-Septin-like GTPase superfamily. EngA (Der) GTPase family. Associates with the 50S ribosomal subunit.

Functionally, GTPase that plays an essential role in the late steps of ribosome biogenesis. The sequence is that of GTPase Der from Staphylococcus aureus (strain Mu3 / ATCC 700698).